The chain runs to 391 residues: Tryptophan synthase beta chain 2 (391 aa).

At Lys83 the chain carries N6-(pyridoxal phosphate)lysine.

This sequence belongs to the TrpB family. As to quaternary structure, tetramer of two alpha and two beta chains. Pyridoxal 5'-phosphate serves as cofactor.

The catalysed reaction is (1S,2R)-1-C-(indol-3-yl)glycerol 3-phosphate + L-serine = D-glyceraldehyde 3-phosphate + L-tryptophan + H2O. Its pathway is amino-acid biosynthesis; L-tryptophan biosynthesis; L-tryptophan from chorismate: step 5/5. The beta subunit is responsible for the synthesis of L-tryptophan from indole and L-serine. This is Tryptophan synthase beta chain 2 (trpB2) from Chlamydia caviae (strain ATCC VR-813 / DSM 19441 / 03DC25 / GPIC) (Chlamydophila caviae).